The sequence spans 1905 residues: Low-density lipoprotein receptor-related protein 4 (1905 aa).

The first 20 residues, 1 to 20 (MRRQWGALLLGALLCAHGLA), serve as a signal peptide directing secretion. Over 21–1725 (SSPECACGRS…AAPGEGLHIS (1705 aa)) the chain is Extracellular. LDL-receptor class A domains lie at 26–67 (ACGR…DGCI), 70–106 (TCSP…QDCP), 109–144 (ECEE…EQCD), 147–183 (KCSD…ENCP), 190–226 (PCNL…SDCS), 230–266 (PCRS…RNCT), 269–305 (MCTA…ENCE), and 311–350 (QCAL…QNCR). Disulfide bonds link Cys27–Cys44, Cys34–Cys57, Cys51–Cys66, Cys71–Cys83, Cys78–Cys96, Cys90–Cys105, Cys110–Cys122, Cys117–Cys135, Cys129–Cys143, Cys148–Cys160, Cys155–Cys173, Cys167–Cys182, Cys191–Cys203, Cys198–Cys216, Cys210–Cys225, Cys231–Cys243, Cys238–Cys256, Cys250–Cys265, Cys270–Cys282, Cys277–Cys295, Cys289–Cys304, Cys312–Cys324, Cys319–Cys337, Cys331–Cys349, Cys358–Cys369, Cys365–Cys378, Cys380–Cys393, Cys399–Cys409, Cys405–Cys418, and Cys420–Cys433. Asn264 is a glycosylation site (N-linked (GlcNAc...) asparagine). Residues 354-394 (GEENCNVNNGGCAQKCQMVRGAVQCTCHTGYRLTEDGHTCQ) form the EGF-like 1; calcium-binding domain. The EGF-like 2; calcium-binding domain maps to 395-434 (DVNECAEEGYCSQGCTNSEGAFQCWCETGYELRPDRRSCK). LDL-receptor class B repeat units lie at residues 480–522 (ELVF…DWVH), 523–565 (DKLY…HPME), 566–609 (GTIY…DYAG), 610–652 (RRMY…FEDS), and 653–693 (LYWT…LHPQ). Asn498 is a glycosylation site (N-linked (GlcNAc...) asparagine). Residues 698-737 (GKNRCGDNNGGCTHLCLPSGQNYTCACPTGFRKISSHACA) form the EGF-like 3 domain. 3 cysteine pairs are disulfide-bonded: Cys702–Cys713, Cys709–Cys722, and Cys724–Cys736. N-linked (GlcNAc...) asparagine glycosylation is present at Asn719. LDL-receptor class B repeat units lie at residues 785-827 (DHVY…DWVT), 828-870 (NKLY…EPMG), 871-914 (GYMY…DYGS), 915-956 (QRLY…LYGE), and 957-998 (RIYW…FHRR). Asn901 carries an N-linked (GlcNAc...) asparagine glycan. N-linked (GlcNAc...) asparagine glycosylation is present at Asn1077. LDL-receptor class B repeat units lie at residues 1093 to 1135 (GKVY…DAIG), 1136 to 1178 (RKVY…YHEM), 1179 to 1222 (GFMY…DKAS), 1223 to 1263 (SQLL…LLDS), 1264 to 1306 (YIYW…DRAQ), 1397 to 1439 (GKVY…DWVA), 1440 to 1482 (RNLY…FPRK), 1483 to 1526 (GYLF…DYDT), 1527 to 1568 (RRIY…QDRW), and 1569 to 1610 (IYWT…SPQR). 2 N-linked (GlcNAc...) asparagine glycosylation sites follow: Asn1415 and Asn1467. The interval 1659–1686 (PRATGMSEKSPVLPNTPPTTLYSSTTRT) is disordered. Low complexity predominate over residues 1676-1686 (PTTLYSSTTRT). A helical transmembrane segment spans residues 1726–1746 (YAIGGLLSILLILVVIAALML). The Cytoplasmic portion of the chain corresponds to 1747-1905 (YRHKKSKFTD…ERKLSSESQV (159 aa)). The Endocytosis signal signature appears at 1766–1769 (NPSY). The segment at 1852–1905 (ASSGSLDDTETEQLLQEEQSECSSVHTAATPERRGSLPDTGWKHERKLSSESQV) is disordered. Residues 1882-1905 (PERRGSLPDTGWKHERKLSSESQV) show a composition bias toward basic and acidic residues.

It belongs to the LDLR family. Homooligomer. Interacts with MUSK; the heterodimer forms an AGRIN receptor complex that binds AGRIN resulting in activation of MUSK. Interacts (via the extracellular domain) with SOST; the interaction facilitates the inhibition of Wnt signaling. Interacts with MESD; the interaction promotes glycosylation of LRP4 and its cell-surface expression. As to expression, expressed in bone; present in osteoblasts and osteocytes. No expression is observed in osteoclast. Expressed in several regions of the brain.

The protein localises to the cell membrane. Functionally, mediates SOST-dependent inhibition of bone formation. Functions as a specific facilitator of SOST-mediated inhibition of Wnt signaling. Plays a key role in the formation and the maintenance of the neuromuscular junction (NMJ), the synapse between motor neuron and skeletal muscle. Directly binds AGRIN and recruits it to the MUSK signaling complex. Mediates the AGRIN-induced phosphorylation of MUSK, the kinase of the complex. The activation of MUSK in myotubes induces the formation of NMJ by regulating different processes including the transcription of specific genes and the clustering of AChR in the postsynaptic membrane. Alternatively, may be involved in the negative regulation of the canonical Wnt signaling pathway, being able to antagonize the LRP6-mediated activation of this pathway. More generally, has been proposed to function as a cell surface endocytic receptor binding and internalizing extracellular ligands for degradation by lysosomes. May play an essential role in the process of digit differentiation. The sequence is that of Low-density lipoprotein receptor-related protein 4 (LRP4) from Homo sapiens (Human).